A 248-amino-acid chain; its full sequence is Homeobox protein CHOX-CAD (248 aa).

A DNA-binding region (homeobox) is located at residues 137–196 (KDKYRVVYTDHQRLELEKEFHYSRYITIRRKAELAAALGLTERQVKIWFQNRRAKERKVN). The segment at 192–248 (ERKVNKKKLQQQSQPTSTTTPTPPAVGTPGPMGTLCSGSAPSLVSSSPLTIKEEFMP) is disordered. Low complexity-rich tracts occupy residues 201–211 (QQQSQPTSTTT) and 228–240 (SGSA…SSPL).

This sequence belongs to the Caudal homeobox family.

It localises to the nucleus. May play an important role during the early steps of organogenesis. This Gallus gallus (Chicken) protein is Homeobox protein CHOX-CAD (CHOX-CAD1).